The following is a 599-amino-acid chain: Transcription factor COE4 (599 aa).

Residues 64–67 form an interaction with DNA region; that stretch reads RKSN. The C5-type zinc-finger motif lies at 152–171; sequence CRVLLTHEIMCSRCCDRKSC. 2 interaction with DNA regions span residues 198-205 and 237-240; these read NCLKNAGN and NNSK. Residues 256–339 enclose the IPT/TIG domain; that stretch reads PCIKAISPGE…KGAPGRFVYT (84 aa). Disordered regions lie at residues 449–473 and 556–586; these read GYARSCGSASPRFAPSPGSQQSSYG and VLRPPSSPSQACPRAHREGLPDQPFEDTDKF. Residues 464–473 show a composition bias toward low complexity; sequence SPGSQQSSYG.

It belongs to the COE family. In terms of assembly, forms either a homodimer or a heterodimer with a related family member. As to expression, expressed in the olfactory epithelium, including in both neuronal and basal cell layers. Absent in the vomeronasal organ. Absent from NK cells and CD8(+) T cells.

The protein resides in the nucleus. Transcription factor. Positively modulates transcription, perhaps less strongly than other early B cell factor/EBF family proteins. Binds an EBF1/Olf-1 consensus site in vitro. The sequence is that of Transcription factor COE4 (Ebf4) from Mus musculus (Mouse).